A 115-amino-acid polypeptide reads, in one-letter code: UPF0122 protein lp_1634 (115 aa).

This sequence belongs to the UPF0122 family.

In terms of biological role, might take part in the signal recognition particle (SRP) pathway. This is inferred from the conservation of its genetic proximity to ftsY/ffh. May be a regulatory protein. The sequence is that of UPF0122 protein lp_1634 from Lactiplantibacillus plantarum (strain ATCC BAA-793 / NCIMB 8826 / WCFS1) (Lactobacillus plantarum).